The chain runs to 126 residues: Protein ApaG (126 aa).

Residues 2-126 (DISTPCIKCQ…FRLAIPNILN (125 aa)) enclose the ApaG domain.

The protein is Protein ApaG of Vibrio atlanticus (strain LGP32) (Vibrio splendidus (strain Mel32)).